The following is a 73-amino-acid chain: Translation initiation factor IF-1 (73 aa).

In terms of domain architecture, S1-like spans 1–73 (MAKKDGAIEV…SRGRIVYRYK (73 aa)).

It belongs to the IF-1 family. In terms of assembly, component of the 30S ribosomal translation pre-initiation complex which assembles on the 30S ribosome in the order IF-2 and IF-3, IF-1 and N-formylmethionyl-tRNA(fMet); mRNA recruitment can occur at any time during PIC assembly.

The protein resides in the cytoplasm. In terms of biological role, one of the essential components for the initiation of protein synthesis. Stabilizes the binding of IF-2 and IF-3 on the 30S subunit to which N-formylmethionyl-tRNA(fMet) subsequently binds. Helps modulate mRNA selection, yielding the 30S pre-initiation complex (PIC). Upon addition of the 50S ribosomal subunit IF-1, IF-2 and IF-3 are released leaving the mature 70S translation initiation complex. The sequence is that of Translation initiation factor IF-1 from Mycolicibacterium smegmatis (strain ATCC 700084 / mc(2)155) (Mycobacterium smegmatis).